The primary structure comprises 444 residues: D(2) dopamine receptor (444 aa).

Residues 1-37 lie on the Extracellular side of the membrane; sequence MDPLNLSWYDDDLERQNWSRPFNGSEGKADRPHYNYY. 3 N-linked (GlcNAc...) asparagine glycosylation sites follow: Asn-5, Asn-17, and Asn-23. A helical membrane pass occupies residues 38–60; it reads AMLLTLLIFIIVFGNVLVCMAVS. At 61-70 the chain is on the cytoplasmic side; that stretch reads REKALQTTTN. A helical membrane pass occupies residues 71–93; it reads YLIVSLAVADLLVATLVMPWVVY. Residues 94 to 108 are Extracellular-facing; sequence LEVVGEWKFSRIHCD. An intrachain disulfide couples Cys-107 to Cys-182. The chain crosses the membrane as a helical span at residues 109–130; that stretch reads IFVTLDVMMCTASILNLCAISI. Topologically, residues 131 to 151 are cytoplasmic; the sequence is DRYTAVAMPMLYNTRYSSKRR. The helical transmembrane segment at 152–172 threads the bilayer; the sequence is VTVMIAIVWVLSFTISCPLLF. At 173–188 the chain is on the extracellular side; sequence GLNNTDQNECIIANPA. A helical membrane pass occupies residues 189–213; that stretch reads FVVYSSIVSFYVPFIVTLLVYIKIY. An interaction with PPP1R9B region spans residues 211-374; that stretch reads KIYIVLRKRR…SQQKEKKATQ (164 aa). Residues 214–374 are Cytoplasmic-facing; that stretch reads IVLRKRRKRV…SQQKEKKATQ (161 aa). The interval 282-329 is disordered; that stretch reads EMLSSTSPPERTRYSPIPPSHHQLTLPDPSHHGLHSNPDSPAKPEKNG. The chain crosses the membrane as a helical span at residues 375–396; sequence MLAIVLGVFIICWLPFFITHIL. At 397 to 410 the chain is on the extracellular side; the sequence is NIHCDCNIPPVLYS. An intrachain disulfide couples Cys-400 to Cys-402. The helical transmembrane segment at 411-432 threads the bilayer; that stretch reads AFTWLGYVNSAVNPIIYTTFNI. The Cytoplasmic segment spans residues 433 to 444; that stretch reads EFRKAFMKILHC. Cys-444 carries S-palmitoyl cysteine lipidation.

It belongs to the G-protein coupled receptor 1 family. Forms homo- and heterooligomers with DRD4. The interaction with DRD4 may modulate agonist-induced downstream signaling. Interacts with CADPS and CADPS2. Interacts with GPRASP1, PPP1R9B and CLIC6. Interacts with ARRB2. Interacts with HTR2A. Interacts with DRD1. Interacts with KCNA2. In terms of processing, palmitoylated. Palmitoylation which is required for proper localization to the plasma membrane and stability of the receptor could be carried on by ZDHHC4, ZDHHC3 and ZDHHC8. In terms of tissue distribution, expressed in the anterior lobe of the pituitary gland. Expressed ventral tegmental area of the midbrain and the pars compacta of the substantia nigra. Expressed seven times more than isoform short in the caudate nucleus. Expressed in the anterior lobe of the pituitary gland. Expressed in the caudate nucleus. Not expressed in the wider brain.

It is found in the cell membrane. Its subcellular location is the golgi apparatus membrane. In terms of biological role, dopamine receptor whose activity is mediated by G proteins which inhibit adenylyl cyclase. Positively regulates postnatal regression of retinal hyaloid vessels via suppression of VEGFR2/KDR activity, downstream of OPN5. In Rattus norvegicus (Rat), this protein is D(2) dopamine receptor (Drd2).